The primary structure comprises 245 residues: UPF0280 protein UNCMA_16740 (245 aa).

It belongs to the UPF0280 family.

This Methanocella arvoryzae (strain DSM 22066 / NBRC 105507 / MRE50) protein is UPF0280 protein UNCMA_16740.